A 60-amino-acid chain; its full sequence is Cytotoxin 10 (60 aa).

Cystine bridges form between Cys3-Cys21, Cys14-Cys38, Cys42-Cys53, and Cys54-Cys59.

Belongs to the three-finger toxin family. Short-chain subfamily. Type IA cytotoxin sub-subfamily. Monomer in solution; Homodimer and oligomer in the presence of negatively charged lipids forming a pore with a size ranging between 20 and 30 Angstroms. Expressed by the venom gland.

The protein resides in the secreted. It is found in the target cell membrane. Its function is as follows. Shows cytolytic activity on many different cells by forming pore in lipid membranes. In vivo, increases heart rate or kills the animal by cardiac arrest. In addition, it binds to heparin with high affinity, interacts with Kv channel-interacting protein 1 (KCNIP1) in a calcium-independent manner, and binds to integrin alpha-V/beta-3 (ITGAV/ITGB3) with moderate affinity. Has hemolytic activity towards human erythrocytes (EC(50)=0.162 uM) and cytolytic activity towards various cell lines. The protein is Cytotoxin 10 of Naja naja (Indian cobra).